We begin with the raw amino-acid sequence, 291 residues long: ATP synthase gamma chain (291 aa).

This sequence belongs to the ATPase gamma chain family. In terms of assembly, F-type ATPases have 2 components, CF(1) - the catalytic core - and CF(0) - the membrane proton channel. CF(1) has five subunits: alpha(3), beta(3), gamma(1), delta(1), epsilon(1). CF(0) has three main subunits: a, b and c.

The protein resides in the cell inner membrane. Produces ATP from ADP in the presence of a proton gradient across the membrane. The gamma chain is believed to be important in regulating ATPase activity and the flow of protons through the CF(0) complex. In Burkholderia ambifaria (strain MC40-6), this protein is ATP synthase gamma chain.